A 170-amino-acid chain; its full sequence is ATP synthase subunit b (170 aa).

Residues 3–23 (IKILFFLALPFLAYASEHGGT) traverse the membrane as a helical segment.

Belongs to the ATPase B chain family. F-type ATPases have 2 components, F(1) - the catalytic core - and F(0) - the membrane proton channel. F(1) has five subunits: alpha(3), beta(3), gamma(1), delta(1), epsilon(1). F(0) has three main subunits: a(1), b(2) and c(10-14). The alpha and beta chains form an alternating ring which encloses part of the gamma chain. F(1) is attached to F(0) by a central stalk formed by the gamma and epsilon chains, while a peripheral stalk is formed by the delta and b chains.

The protein localises to the cell inner membrane. In terms of biological role, f(1)F(0) ATP synthase produces ATP from ADP in the presence of a proton or sodium gradient. F-type ATPases consist of two structural domains, F(1) containing the extramembraneous catalytic core and F(0) containing the membrane proton channel, linked together by a central stalk and a peripheral stalk. During catalysis, ATP synthesis in the catalytic domain of F(1) is coupled via a rotary mechanism of the central stalk subunits to proton translocation. Component of the F(0) channel, it forms part of the peripheral stalk, linking F(1) to F(0). The protein is ATP synthase subunit b of Campylobacter concisus (strain 13826).